A 130-amino-acid polypeptide reads, in one-letter code: Small ribosomal subunit protein uS8 (130 aa).

It belongs to the universal ribosomal protein uS8 family. Part of the 30S ribosomal subunit.

Functionally, one of the primary rRNA binding proteins, it binds directly to 16S rRNA central domain where it helps coordinate assembly of the platform of the 30S subunit. The protein is Small ribosomal subunit protein uS8 of Methanococcus maripaludis (strain C5 / ATCC BAA-1333).